Here is a 773-residue protein sequence, read N- to C-terminus: Transducin-like enhancer protein 4 (773 aa).

3 disordered regions span residues 1 to 22, 140 to 162, and 182 to 360; these read MIRDLSKMYPQTRHPAPHQPAQ, HGHGLPVPLTPHPSGLQPPAIPP, and LPIK…ASSL. Residues 1 to 136 are q domain; it reads MIRDLSKMYP…AIIGQQLQAQ (136 aa). Residues 137–204 form a GP domain region; that stretch reads HLSHGHGLPV…HQRDRDSIKS (68 aa). The span at 183–202 shows a compositional bias: basic and acidic residues; that stretch reads PIKDEKKHHDNDHQRDRDSI. A compositionally biased stretch (low complexity) spans 203 to 212; that stretch reads KSSSVSPSAS. A ccN domain region spans residues 205–274; it reads SSVSPSASFR…SPRGSPAHSP (70 aa). Residues Ser-208, Ser-212, and Ser-222 each carry the phosphoserine modification. Basic and acidic residues predominate over residues 215–252; that stretch reads GAEKHRNSADYSSESKKQKTEEKEIAARYDSDGEKSDD. Position 237 is an N6-acetyllysine (Lys-237). Phosphoserine occurs at positions 245, 250, 269, and 273. Residues 273 to 289 are compositionally biased toward basic and acidic residues; that stretch reads SPRENGLDKTRLLKKDA. The tract at residues 275–452 is SP domain; sequence RENGLDKTRL…PGGKPAYSFH (178 aa). At Lys-281 the chain carries N6-acetyllysine. A compositionally biased stretch (low complexity) spans 290–305; the sequence is PISPASIASSSSTPSS. Phosphoserine is present on Ser-292. Residues 317-328 are compositionally biased toward polar residues; it reads TTPVSKSNTPTP. The residue at position 318 (Thr-318) is a Phosphothreonine. A phosphoserine mark is found at Ser-321 and Ser-323. 4 positions are modified to phosphothreonine: Thr-325, Thr-327, Thr-334, and Thr-340. Residue Ser-419 is modified to Phosphoserine. WD repeat units lie at residues 485-523, 531-570, 575-614, 617-656, 658-697, 699-738, and 740-773; these read NHGEVVCAVTISNPTRHVYTGGKGCVKVWDISHPGNKSP, NRDNYIRSCRLLPDGRTLIVGGEASTLSIWDLAAPTPRIK, SSAPACYALAISPDSKVCFSCCSDGNIAVWDLHNQTLVRQ, GHTDGASCIDISNDGTKLWTGGLDNTVRSWDLREGRQLQQ, DFTSQIFSLGYCPTGEWLAVGMENSNVEVLHVTKPDKYQL, LHESCVLSLKFAHCGKWFVSTGKDNLLNAWRTPYGASIFQ, and KESSSVLSCDISVDDKYIVTGSGDKKATVYEVIY.

This sequence belongs to the WD repeat Groucho/TLE family. In terms of assembly, homooligomer and heterooligomer with other family members. Interacts with PAX5. Interacts with LEF1, TCF7, TCF7L1 and TCF7L2. Interacts with ZNF703; TLE4 may mediate ZNF703 transcriptional repression. Interacts with SIX3 and SIX6. Interacts with PAX2. Interacts with TLE1. Phosphorylated. PAX5 binding increases phosphorylation. Post-translationally, ubiquitinated by XIAP/BIRC4. As to expression, in all tissues examined, mostly in brain, and muscle.

Its subcellular location is the nucleus. Functionally, transcriptional corepressor that binds to a number of transcription factors. Inhibits the transcriptional activation mediated by PAX5, and by CTNNB1 and TCF family members in Wnt signaling. The effects of full-length TLE family members may be modulated by association with dominant-negative AES. Essential for the transcriptional repressor activity of SIX3 during retina and lens development and for SIX3 transcriptional auto-repression. Involved in transcriptional repression of GNRHR and enhances MSX1-mediated transcriptional repression of CGA/alpha-GSU. The sequence is that of Transducin-like enhancer protein 4 (TLE4) from Homo sapiens (Human).